The sequence spans 189 residues: UPF0301 protein RF_0044 (189 aa).

It belongs to the UPF0301 (AlgH) family.

The sequence is that of UPF0301 protein RF_0044 from Rickettsia felis (strain ATCC VR-1525 / URRWXCal2) (Rickettsia azadi).